The primary structure comprises 101 residues: Small ribosomal subunit protein uS14 (101 aa).

The segment at 1–21 (MAKTSSVEKNNRRRKLADQYG) is disordered.

Belongs to the universal ribosomal protein uS14 family. As to quaternary structure, part of the 30S ribosomal subunit. Contacts proteins S3 and S10.

Binds 16S rRNA, required for the assembly of 30S particles and may also be responsible for determining the conformation of the 16S rRNA at the A site. This is Small ribosomal subunit protein uS14 from Mesorhizobium japonicum (strain LMG 29417 / CECT 9101 / MAFF 303099) (Mesorhizobium loti (strain MAFF 303099)).